Here is a 453-residue protein sequence, read N- to C-terminus: Bifunctional protein GlmU (453 aa).

The tract at residues 1–226 (MKFSTVILAA…SIEVEGVNDR (226 aa)) is pyrophosphorylase. UDP-N-acetyl-alpha-D-glucosamine contacts are provided by residues 8 to 11 (LAAG), Lys-22, Gln-73, 78 to 79 (GT), 100 to 102 (YGD), Gly-137, Glu-151, Asn-166, and Asn-224. Asp-102 is a Mg(2+) binding site. Residue Asn-224 coordinates Mg(2+). The linker stretch occupies residues 227 to 247 (IQLARLERAFQARQAKKLLEQ). An N-acetyltransferase region spans residues 248–453 (GVMLRDPARF…AGWQRPAKKK (206 aa)). Residues Arg-330 and Lys-348 each contribute to the UDP-N-acetyl-alpha-D-glucosamine site. His-360 serves as the catalytic Proton acceptor. Positions 363 and 374 each coordinate UDP-N-acetyl-alpha-D-glucosamine. Residues Ala-377, 383–384 (NY), Ser-402, Ala-420, and Arg-437 contribute to the acetyl-CoA site.

This sequence in the N-terminal section; belongs to the N-acetylglucosamine-1-phosphate uridyltransferase family. In the C-terminal section; belongs to the transferase hexapeptide repeat family. As to quaternary structure, homotrimer. Mg(2+) serves as cofactor.

The protein resides in the cytoplasm. It carries out the reaction alpha-D-glucosamine 1-phosphate + acetyl-CoA = N-acetyl-alpha-D-glucosamine 1-phosphate + CoA + H(+). It catalyses the reaction N-acetyl-alpha-D-glucosamine 1-phosphate + UTP + H(+) = UDP-N-acetyl-alpha-D-glucosamine + diphosphate. Its pathway is nucleotide-sugar biosynthesis; UDP-N-acetyl-alpha-D-glucosamine biosynthesis; N-acetyl-alpha-D-glucosamine 1-phosphate from alpha-D-glucosamine 6-phosphate (route II): step 2/2. It participates in nucleotide-sugar biosynthesis; UDP-N-acetyl-alpha-D-glucosamine biosynthesis; UDP-N-acetyl-alpha-D-glucosamine from N-acetyl-alpha-D-glucosamine 1-phosphate: step 1/1. The protein operates within bacterial outer membrane biogenesis; LPS lipid A biosynthesis. Functionally, catalyzes the last two sequential reactions in the de novo biosynthetic pathway for UDP-N-acetylglucosamine (UDP-GlcNAc). The C-terminal domain catalyzes the transfer of acetyl group from acetyl coenzyme A to glucosamine-1-phosphate (GlcN-1-P) to produce N-acetylglucosamine-1-phosphate (GlcNAc-1-P), which is converted into UDP-GlcNAc by the transfer of uridine 5-monophosphate (from uridine 5-triphosphate), a reaction catalyzed by the N-terminal domain. The protein is Bifunctional protein GlmU of Vibrio cholerae serotype O1 (strain ATCC 39541 / Classical Ogawa 395 / O395).